A 360-amino-acid polypeptide reads, in one-letter code: Probable butyrate kinase (360 aa).

Belongs to the acetokinase family.

The protein resides in the cytoplasm. It carries out the reaction butanoate + ATP = butanoyl phosphate + ADP. This chain is Probable butyrate kinase, found in Enterococcus faecalis (strain ATCC 700802 / V583).